Reading from the N-terminus, the 193-residue chain is GTP cyclohydrolase-2 (193 aa).

45-49 (RIHSE) is a binding site for GTP. Zn(2+)-binding residues include Cys-50, Cys-61, and Cys-63. GTP-binding positions include Gln-66, 87 to 89 (EGR), and Thr-109. Catalysis depends on Asp-121, which acts as the Proton acceptor. Arg-123 serves as the catalytic Nucleophile. Positions 144 and 149 each coordinate GTP.

The protein belongs to the GTP cyclohydrolase II family. It depends on Zn(2+) as a cofactor.

It carries out the reaction GTP + 4 H2O = 2,5-diamino-6-hydroxy-4-(5-phosphoribosylamino)-pyrimidine + formate + 2 phosphate + 3 H(+). It participates in cofactor biosynthesis; riboflavin biosynthesis; 5-amino-6-(D-ribitylamino)uracil from GTP: step 1/4. Functionally, catalyzes the conversion of GTP to 2,5-diamino-6-ribosylamino-4(3H)-pyrimidinone 5'-phosphate (DARP), formate and pyrophosphate. The protein is GTP cyclohydrolase-2 of Campylobacter hominis (strain ATCC BAA-381 / DSM 21671 / CCUG 45161 / LMG 19568 / NCTC 13146 / CH001A).